Consider the following 328-residue polypeptide: Malate dehydrogenase (328 aa).

11 to 17 (GAAGQIG) contributes to the NAD(+) binding site. Residues arginine 94 and arginine 100 each coordinate substrate. NAD(+)-binding positions include asparagine 107, glutamine 114, and 131-133 (VGN). Asparagine 133 and arginine 164 together coordinate substrate. Catalysis depends on histidine 189, which acts as the Proton acceptor.

Belongs to the LDH/MDH superfamily. MDH type 2 family.

The catalysed reaction is (S)-malate + NAD(+) = oxaloacetate + NADH + H(+). Its function is as follows. Catalyzes the reversible oxidation of malate to oxaloacetate. The polypeptide is Malate dehydrogenase (Xanthomonas campestris pv. campestris (strain 8004)).